Consider the following 781-residue polypeptide: Probable beta-D-xylosidase 5 (781 aa).

Positions 1 to 23 are cleaved as a signal peptide; it reads MSIRRFVRLSLLIIALVSSLCES. Asn-43, Asn-103, and Asn-123 each carry an N-linked (GlcNAc...) asparagine glycan. The active site involves Asp-291. 6 N-linked (GlcNAc...) asparagine glycosylation sites follow: Asn-342, Asn-424, Asn-504, Asn-543, Asn-601, and Asn-653.

It belongs to the glycosyl hydrolase 3 family.

The protein localises to the secreted. It is found in the extracellular space. The protein resides in the extracellular matrix. The sequence is that of Probable beta-D-xylosidase 5 (BXL5) from Arabidopsis thaliana (Mouse-ear cress).